A 382-amino-acid polypeptide reads, in one-letter code: Galactokinase (382 aa).

34 to 37 provides a ligand contact to substrate; the sequence is EHTD. 124-130 serves as a coordination point for ATP; the sequence is GAGLSSS. Mg(2+) contacts are provided by serine 130 and glutamate 162. Residue aspartate 174 is the Proton acceptor of the active site. Tyrosine 223 is a binding site for substrate.

Belongs to the GHMP kinase family. GalK subfamily.

Its subcellular location is the cytoplasm. The catalysed reaction is alpha-D-galactose + ATP = alpha-D-galactose 1-phosphate + ADP + H(+). It participates in carbohydrate metabolism; galactose metabolism. Catalyzes the transfer of the gamma-phosphate of ATP to D-galactose to form alpha-D-galactose-1-phosphate (Gal-1-P). This is Galactokinase from Escherichia coli O157:H7 (strain EC4115 / EHEC).